Here is a 70-residue protein sequence, read N- to C-terminus: Large ribosomal subunit protein bL32c (70 aa).

Disordered stretches follow at residues 1–20 (MAVPKKRTSRSKKKIRKNVR) and 51–70 (NDDSSGSSESKLTAIDLDDP). Residues 52 to 61 (DDSSGSSESK) show a composition bias toward polar residues.

It belongs to the bacterial ribosomal protein bL32 family.

Its subcellular location is the plastid. The protein resides in the chloroplast. The polypeptide is Large ribosomal subunit protein bL32c (rpl32) (Pinus thunbergii (Japanese black pine)).